A 278-amino-acid chain; its full sequence is 4-diphosphocytidyl-2-C-methyl-D-erythritol kinase (278 aa).

The active site involves Lys10. ATP is bound at residue 93 to 103 (PMGGGLGGGSS). Asp135 is a catalytic residue.

Belongs to the GHMP kinase family. IspE subfamily.

The enzyme catalyses 4-CDP-2-C-methyl-D-erythritol + ATP = 4-CDP-2-C-methyl-D-erythritol 2-phosphate + ADP + H(+). It participates in isoprenoid biosynthesis; isopentenyl diphosphate biosynthesis via DXP pathway; isopentenyl diphosphate from 1-deoxy-D-xylulose 5-phosphate: step 3/6. In terms of biological role, catalyzes the phosphorylation of the position 2 hydroxy group of 4-diphosphocytidyl-2C-methyl-D-erythritol. The chain is 4-diphosphocytidyl-2-C-methyl-D-erythritol kinase from Thiobacillus denitrificans (strain ATCC 25259 / T1).